Consider the following 530-residue polypeptide: Calcium uptake protein 3, mitochondrial (530 aa).

A mitochondrion-targeting transit peptide spans M1 to F43. Residues G92–G115 are disordered. The EF-hand 1 domain occupies K232–K267. Residues D245, D247, N249, M251, D253, and E256 each coordinate Ca(2+). Positions V401–L436 constitute an EF-hand 2; degenerate domain. The EF-hand 3 domain maps to F470–R505. D483, D485, D487, Q489, and E494 together coordinate Ca(2+).

It belongs to the MICU1 family. MICU3 subfamily. In terms of assembly, heterodimer; disulfide-linked; heterodimerizes with MICU1. Component of the uniplex complex, composed of MCU, EMRE/SMDT1, MICU1 and MICU3 in a 4:4:1:1 stoichiometry. As to expression, specifically expressed in the central nervous system and skeletal muscle.

It is found in the mitochondrion intermembrane space. It localises to the mitochondrion inner membrane. In terms of biological role, tissue-specific calcium sensor of the mitochondrial calcium uniporter (MCU) channel, which specifically regulates MCU channel activity in the central nervous system and skeletal muscle. Senses calcium level via its EF-hand domains: compared to MICU1 and MICU2, MICU3 has a higher affinity for calcium. MICU1 and MICU3 form a disulfide-linked heterodimer that stimulates and inhibits MCU activity, depending on the concentration of calcium. At low calcium levels, MICU1 occludes the pore of the MCU channel, preventing mitochondrial calcium uptake. At higher calcium levels, calcium-binding to MICU1 and MICU3 induces a conformational change that weakens MCU-MICU1 interactions and moves the MICU1-MICU3 heterodimer away from the pore, allowing calcium permeation through the MCU channel. The high calcium affinity of MICU3 lowers the calcium threshold necessary for calcium permeation through the MCU channel. The MICU1-MICU3 heterodimer promotes flexibility of neurotransmission in neuronal cells by enhancing mitochondrial calcium uptake in presynapses. It is also required to increase mitochondrial calcium uptake in skeletal muscle cells, thereby increasing ATP production. The polypeptide is Calcium uptake protein 3, mitochondrial (Homo sapiens (Human)).